The following is a 563-amino-acid chain: Arginine--tRNA ligase (563 aa).

Residues 120–130 (PNIAKPFHIGH) carry the 'HIGH' region motif.

The protein belongs to the class-I aminoacyl-tRNA synthetase family. In terms of assembly, monomer.

Its subcellular location is the cytoplasm. It carries out the reaction tRNA(Arg) + L-arginine + ATP = L-arginyl-tRNA(Arg) + AMP + diphosphate. This Clostridium botulinum (strain ATCC 19397 / Type A) protein is Arginine--tRNA ligase.